Consider the following 229-residue polypeptide: Potassium/proton antiporter CemA (229 aa).

3 helical membrane-spanning segments follow: residues 6–26 (AFIP…ISLC), 107–127 (ILHF…SFWG), and 189–209 (ILSG…KYWI).

It belongs to the CemA family.

The protein resides in the plastid. It is found in the chloroplast inner membrane. It catalyses the reaction K(+)(in) + H(+)(out) = K(+)(out) + H(+)(in). Contributes to K(+)/H(+) antiport activity by supporting proton efflux to control proton extrusion and homeostasis in chloroplasts in a light-dependent manner to modulate photosynthesis. Prevents excessive induction of non-photochemical quenching (NPQ) under continuous-light conditions. Indirectly promotes efficient inorganic carbon uptake into chloroplasts. The sequence is that of Potassium/proton antiporter CemA from Arabidopsis thaliana (Mouse-ear cress).